Consider the following 428-residue polypeptide: Maltoporin (428 aa).

Positions 1 to 21 (MKKTLLAVAIGGAMFATSAAA) are cleaved as a signal peptide.

Belongs to the porin LamB (TC 1.B.3) family. In terms of assembly, homotrimer formed of three 18-stranded antiparallel beta-barrels, containing three independent channels.

Its subcellular location is the cell outer membrane. The catalysed reaction is beta-maltose(in) = beta-maltose(out). Its function is as follows. Involved in the transport of maltose and maltodextrins. This chain is Maltoporin, found in Mannheimia succiniciproducens (strain KCTC 0769BP / MBEL55E).